We begin with the raw amino-acid sequence, 124 residues long: Fluoride-specific ion channel FluC (124 aa).

4 helical membrane passes run 4 to 24 (IFYI…TTLV), 35 to 55 (YATF…FGYL), 63 to 83 (PYLK…FSAF), and 96 to 116 (ILIA…ATWT). Na(+)-binding residues include Gly75 and Thr78.

This sequence belongs to the fluoride channel Fluc/FEX (TC 1.A.43) family.

Its subcellular location is the cell inner membrane. The catalysed reaction is fluoride(in) = fluoride(out). Na(+) is not transported, but it plays an essential structural role and its presence is essential for fluoride channel function. Its function is as follows. Fluoride-specific ion channel. Important for reducing fluoride concentration in the cell, thus reducing its toxicity. The chain is Fluoride-specific ion channel FluC from Flavobacterium psychrophilum (strain ATCC 49511 / DSM 21280 / CIP 103535 / JIP02/86).